The following is a 61-amino-acid chain: Small ribosomal subunit protein uS14 (61 aa).

Residues cysteine 24, cysteine 27, cysteine 40, and cysteine 43 each coordinate Zn(2+).

The protein belongs to the universal ribosomal protein uS14 family. Zinc-binding uS14 subfamily. Part of the 30S ribosomal subunit. Contacts proteins S3 and S10. Zn(2+) is required as a cofactor.

Its function is as follows. Binds 16S rRNA, required for the assembly of 30S particles and may also be responsible for determining the conformation of the 16S rRNA at the A site. The polypeptide is Small ribosomal subunit protein uS14 (Mesomycoplasma hyopneumoniae (strain 232) (Mycoplasma hyopneumoniae)).